Consider the following 201-residue polypeptide: 3-isopropylmalate dehydratase small subunit (201 aa).

This sequence belongs to the LeuD family. LeuD type 1 subfamily. As to quaternary structure, heterodimer of LeuC and LeuD.

The enzyme catalyses (2R,3S)-3-isopropylmalate = (2S)-2-isopropylmalate. It functions in the pathway amino-acid biosynthesis; L-leucine biosynthesis; L-leucine from 3-methyl-2-oxobutanoate: step 2/4. Its function is as follows. Catalyzes the isomerization between 2-isopropylmalate and 3-isopropylmalate, via the formation of 2-isopropylmaleate. The protein is 3-isopropylmalate dehydratase small subunit of Shewanella frigidimarina (strain NCIMB 400).